The following is a 130-amino-acid chain: Histone H2A type 3 (130 aa).

The interval 1–22 (MSGRGKQGGKARAKAKSRSSRA) is disordered. Serine 2 carries the N-acetylserine modification. The residue at position 2 (serine 2) is a Phosphoserine; by RPS6KA5. Arginine 4 carries the post-translational modification Citrulline; alternate. Arginine 4 is subject to Symmetric dimethylarginine; by PRMT5; alternate. N6-(2-hydroxyisobutyryl)lysine is present on lysine 6. Residues 7 to 19 (QGGKARAKAKSRS) show a composition bias toward basic residues. Position 10 is an N6-(2-hydroxyisobutyryl)lysine; alternate (lysine 10). Lysine 10 and lysine 14 each carry N6-(beta-hydroxybutyryl)lysine; alternate. N6-lactoyllysine; alternate is present on lysine 10. Lysine 10 bears the N6-succinyllysine; alternate mark. A Glycyl lysine isopeptide (Lys-Gly) (interchain with G-Cter in ubiquitin); alternate cross-link involves residue lysine 14. Lysine 16 participates in a covalent cross-link: Glycyl lysine isopeptide (Lys-Gly) (interchain with G-Cter in ubiquitin). An N6-(2-hydroxyisobutyryl)lysine; alternate modification is found at lysine 37. The residue at position 37 (lysine 37) is an N6-(beta-hydroxybutyryl)lysine; alternate. Position 37 is an N6-crotonyllysine; alternate (lysine 37). N6-(2-hydroxyisobutyryl)lysine is present on residues lysine 75 and lysine 76. Lysine 96 bears the N6-(2-hydroxyisobutyryl)lysine; alternate mark. Residue lysine 96 is modified to N6-(beta-hydroxybutyryl)lysine; alternate. Lysine 96 carries the N6-succinyllysine; alternate modification. Position 96 is an N6-glutaryllysine; alternate (lysine 96). An N5-methylglutamine modification is found at glutamine 105. Lysine 119 bears the N6-(2-hydroxyisobutyryl)lysine; alternate mark. N6-(beta-hydroxybutyryl)lysine; alternate is present on lysine 119. N6-crotonyllysine; alternate is present on residues lysine 119 and lysine 120. N6-glutaryllysine; alternate is present on residues lysine 119 and lysine 120. Lysine 120 is covalently cross-linked (Glycyl lysine isopeptide (Lys-Gly) (interchain with G-Cter in ubiquitin); alternate). The residue at position 121 (threonine 121) is a Phosphothreonine; by DCAF1. N6-crotonyllysine; alternate is present on lysine 126. An N6-glutaryllysine; alternate modification is found at lysine 126.

This sequence belongs to the histone H2A family. As to quaternary structure, the nucleosome is a histone octamer containing two molecules each of H2A, H2B, H3 and H4 assembled in one H3-H4 heterotetramer and two H2A-H2B heterodimers. The octamer wraps approximately 147 bp of DNA. In terms of processing, deiminated on Arg-4 in granulocytes upon calcium entry. Monoubiquitination of Lys-120 (H2AK119Ub) by RING1, TRIM37 and RNF2/RING2 complex gives a specific tag for epigenetic transcriptional repression and participates in X chromosome inactivation of female mammals. It is involved in the initiation of both imprinted and random X inactivation. Ubiquitinated H2A is enriched in inactive X chromosome chromatin. Ubiquitination of H2A functions downstream of methylation of 'Lys-27' of histone H3 (H3K27me). H2AK119Ub by RNF2/RING2 can also be induced by ultraviolet and may be involved in DNA repair. Monoubiquitination of Lys-120 (H2AK119Ub) by TRIM37 may promote transformation of cells in a number of breast cancers. Following DNA double-strand breaks (DSBs), it is ubiquitinated through 'Lys-63' linkage of ubiquitin moieties by the E2 ligase UBE2N and the E3 ligases RNF8 and RNF168, leading to the recruitment of repair proteins to sites of DNA damage. Ubiquitination at Lys-14 and Lys-16 (H2AK13Ub and H2AK15Ub, respectively) in response to DNA damage is initiated by RNF168 that mediates monoubiquitination at these 2 sites, and 'Lys-63'-linked ubiquitin are then conjugated to monoubiquitin; RNF8 is able to extend 'Lys-63'-linked ubiquitin chains in vitro. Deubiquitinated by USP51 at Lys-14 and Lys-16 (H2AK13Ub and H2AK15Ub, respectively) after damaged DNA is repaired. H2AK119Ub and ionizing radiation-induced 'Lys-63'-linked ubiquitination (H2AK13Ub and H2AK15Ub) are distinct events. Post-translationally, phosphorylation on Ser-2 (H2AS1ph) is enhanced during mitosis. Phosphorylation on Ser-2 by RPS6KA5/MSK1 directly represses transcription. Acetylation of H3 inhibits Ser-2 phosphorylation by RPS6KA5/MSK1. Phosphorylation at Thr-121 (H2AT120ph) by DCAF1 is present in the regulatory region of many tumor suppresor genes and down-regulates their transcription. In terms of processing, glutamine methylation at Gln-105 (H2AQ104me) by FBL is specifically dedicated to polymerase I. It is present at 35S ribosomal DNA locus and impairs binding of the FACT complex. Symmetric dimethylation on Arg-4 by the PRDM1/PRMT5 complex may play a crucial role in the germ-cell lineage. Post-translationally, crotonylation (Kcr) is specifically present in male germ cells and marks testis-specific genes in post-meiotic cells, including X-linked genes that escape sex chromosome inactivation in haploid cells. Crotonylation marks active promoters and enhancers and confers resistance to transcriptional repressors. It is also associated with post-meiotically activated genes on autosomes. In terms of processing, lactylated in macrophages by EP300/P300 by using lactoyl-CoA directly derived from endogenous or exogenous lactate, leading to stimulates gene transcription.

The protein resides in the nucleus. The protein localises to the chromosome. In terms of biological role, core component of nucleosome. Nucleosomes wrap and compact DNA into chromatin, limiting DNA accessibility to the cellular machineries which require DNA as a template. Histones thereby play a central role in transcription regulation, DNA repair, DNA replication and chromosomal stability. DNA accessibility is regulated via a complex set of post-translational modifications of histones, also called histone code, and nucleosome remodeling. This is Histone H2A type 3 from Homo sapiens (Human).